The sequence spans 489 residues: ATP-dependent zinc metalloprotease FtsH 3 (489 aa).

The Cytoplasmic portion of the chain corresponds to M1–Q14. Residues S15 to W31 traverse the membrane as a helical segment. Residues Q32 to N489 are Extracellular-facing. G95–T102 provides a ligand contact to ATP. H315 is a binding site for Zn(2+). The active site involves E316. Positions 319 and 391 each coordinate Zn(2+).

The protein in the central section; belongs to the AAA ATPase family. In the C-terminal section; belongs to the peptidase M41 family. Homohexamer. Requires Zn(2+) as cofactor.

It localises to the cell membrane. In terms of biological role, acts as a processive, ATP-dependent zinc metallopeptidase for both cytoplasmic and membrane proteins. Plays a role in the quality control of integral membrane proteins. This Sphaerobacter thermophilus (strain ATCC 49802 / DSM 20745 / KCCM 41009 / NCIMB 13125 / S 6022) protein is ATP-dependent zinc metalloprotease FtsH 3.